Reading from the N-terminus, the 1221-residue chain is Adhesion G-protein coupled receptor G6 (1221 aa).

An N-terminal signal peptide occupies residues 1–37 (MMFRSDRMWSCHWKWKPSPLLFLFALYIMCVPHSVWG). At 38 to 862 (CANCRVVLSN…ASQLDARNTK (825 aa)) the chain is on the extracellular side. A disulfide bond links C41 and C67. Residues 41–149 (CRVVLSNPSG…KGFNASYIRV (109 aa)) enclose the CUB domain. Ca(2+) contacts are provided by E89 and D97. C94 and C111 are joined by a disulfide. The N-linked (GlcNAc...) asparagine glycan is linked to N121. Ca(2+)-binding residues include D134, S136, and I137. 12 N-linked (GlcNAc...) asparagine glycosylation sites follow: N143, N206, N258, N314, N324, N353, N438, N445, N452, N485, N488, and N505. The region spanning 154–356 (RNQKVILPQT…ALKAESNLSC (203 aa)) is the Pentraxin (PTX) domain. Cystine bridges form between C186/C254 and C231/C277. The mediates interaction with laminin-2 stretch occupies residues 473-837 (EPRLVLWALL…SDASETVCLC (365 aa)). 2 cysteine pairs are disulfide-bonded: C525–C560 and C548–C580. Residues N563, N593, N600, N605, N667, N673, N695, N704, N750, N776, N811, and N818 are each glycosylated (N-linked (GlcNAc...) asparagine). The GAIN-B domain maps to 670-853 (SHVNITTRNL…GVLMDLPRSA (184 aa)). Disulfide bonds link C803–C835 and C822–C837. The tract at residues 803 to 853 (CAFWDLNKNKSFGGWNTSGCVAHRDSDASETVCLCNHFTHFGVLMDLPRSA) is GPS. The stachel stretch occupies residues 842-850 (HFGVLMDLP). A helical membrane pass occupies residues 863 to 883 (VLTFISYIGCGISAIFSAATL). Residues 884–903 (LTYVAFEKLRRDYPSKILMN) are Cytoplasmic-facing. Residues 904–924 (LSTALLFLNLLFLLDGWITSF) traverse the membrane as a helical segment. The Extracellular segment spans residues 925-929 (NVDGL). The helical transmembrane segment at 930–950 (CIAVAVLLHFFLLATFTWMGL) threads the bilayer. The Cytoplasmic portion of the chain corresponds to 951–970 (EAIHMYIALVKVFNTYIRRY). The chain crosses the membrane as a helical span at residues 971–991 (ILKFCIIGWGLPALVVSVVLA). Residues 992–1024 (SRNNNEVYGKESYGKEKGDEFCWIQDPVIFYVT) are Extracellular-facing. A helical transmembrane segment spans residues 1025 to 1045 (CAGYFGVMFFLNIAMFIVVMV). At 1046–1069 (QICGRNGKRSNRTLREEVLRNLRS) the chain is on the cytoplasmic side. The helical transmembrane segment at 1070-1090 (VVSLTFLLGMTWGFAFFAWGP) threads the bilayer. The Extracellular segment spans residues 1091–1092 (LN). A helical transmembrane segment spans residues 1093 to 1113 (IPFMYLFSIFNSLQGLFIFIF). N1103 contacts 17alpha-hydroxyprogesterone. The Cytoplasmic segment spans residues 1114-1221 (HCAMKENVQK…GQVLVKTGPC (108 aa)). A disordered region spans residues 1156–1176 (NLGKSLSSSSIGSNSTYLTSK). S1165 and S1168 each carry phosphoserine.

Belongs to the G-protein coupled receptor 2 family. Adhesion G-protein coupled receptor (ADGR) subfamily. As to quaternary structure, heterodimer of 2 chains generated by proteolytic processing; the large extracellular N-terminal fragment and the membrane-bound C-terminal fragment predominantly remain associated and non-covalently linked. Interacts with Laminin-2; this interaction stabilizes the receptor in an inactive state. Laminin-2 polymerization could facilitate ADGRG6-NTF removal, thereby exposing the tethered agonist to drive myelination. Interacts with PRNP. Interacts with ITGB1. Interacts with LRP1. Proteolytically cleaved into 2 conserved sites: one in the GPS region of the GAIN-B domain (S1 site) and the other in the middle of the extracellular domain (S2 site). The proteolytic cleavage at S1 site generates an extracellular subunit and a seven-transmembrane subunit. Furin is involved in the cleavage of the S2 site generating a soluble fragment. Processing at the GPS region occurred independent of and probably prior to the cleavage at the S2 site. Proteolytic cleavage is required for activation of the receptor. Post-translationally, highly glycosylated. As to expression, expressed in placenta and to a lower extent in pancreas and liver. Detected in aortic endothelial cells but not in skin microvascular endothelial cells.

Its subcellular location is the cell membrane. Forms a heterodimer of 2 chains generated by proteolytic processing that remain associated through non-covalent interactions mediated by the GAIN-B domain. In the inactivated receptor, the Stachel sequence (also named stalk) is embedded in the GAIN-B domain, where it adopts a beta-strand conformation. On activation, the Stachel moves into the 7 transmembrane region and adopts a twisted hook-shaped configuration that forms contacts within the receptor, leading to coupling of a G-alpha protein, which activates signaling. The cleaved GAIN-B and N-terminal domains can then dissociate from the rest of the receptor. Adhesion G-protein coupled receptor (aGPCR) for steroid hormones, such as progesterone and 17alpha-hydroxyprogesterone (17OHP). Involved in many biological processes, such as myelination, sprouting angiogenesis, placenta, ear and cartilage development. Ligand binding causes a conformation change that triggers signaling via guanine nucleotide-binding proteins (G proteins) and modulates the activity of downstream effectors, such as adenylate cyclase. ADGRG6 is coupled to G(i) G alpha proteins and mediates inhibition of adenylate cyclase. Also able to couple to G(q) G proteins. Involved in myelination of the peripheral nervous system: required for differentiation of promyelinating Schwann cells and for normal myelination of axons. Also acts as a regulator of body length and bone mass. Acts as a regulator of blood-brain barrier formation in the central nervous system vie its association with LRP1 and ITGB1. The protein is Adhesion G-protein coupled receptor G6 of Homo sapiens (Human).